A 304-amino-acid polypeptide reads, in one-letter code: N-acetyllactosaminide alpha-2,3-sialyltransferase (304 aa).

Residues 221–225, 242–243, and 262–263 each bind CMP-N-acetyl-beta-neuraminate; these read FPHPA, FE, and SS. Catalysis depends on His-223, which acts as the Proton donor.

It belongs to the glycosyltransferase 52 family.

The catalysed reaction is a beta-D-galactosyl-(1-&gt;4)-N-acetyl-beta-D-glucosaminyl derivative + CMP-N-acetyl-beta-neuraminate = an N-acetyl-alpha-neuraminyl-(2-&gt;3)-beta-D-galactosyl-(1-&gt;4)-N-acetyl-beta-D-glucosaminyl derivative + CMP + H(+). It functions in the pathway bacterial outer membrane biogenesis; lipooligosaccharide biosynthesis. Functionally, catalyzes the transfer of sialic acid from the substrate CMP-N-acetylneuraminate to the terminal galactose residue of the N-acetyllactosamine moiety of surface lipooligosaccharide (LOS). Thus, functions in the sialylation of LOS, which plays a role in the evasion of the host immune response. This chain is N-acetyllactosaminide alpha-2,3-sialyltransferase, found in Haemophilus influenzae (strain ATCC 51907 / DSM 11121 / KW20 / Rd).